The following is a 247-amino-acid chain: Uridylate kinase (247 aa).

17 to 20 (KFSG) provides a ligand contact to ATP. Gly-59 is a UMP binding site. Gly-60 and Arg-64 together coordinate ATP. UMP-binding positions include Asp-79 and 140–147 (TGNPFFTT). The ATP site is built by Thr-167, Tyr-173, and Asp-176.

It belongs to the UMP kinase family. In terms of assembly, homohexamer.

The protein localises to the cytoplasm. It catalyses the reaction UMP + ATP = UDP + ADP. The protein operates within pyrimidine metabolism; CTP biosynthesis via de novo pathway; UDP from UMP (UMPK route): step 1/1. With respect to regulation, inhibited by UTP. Functionally, catalyzes the reversible phosphorylation of UMP to UDP. This is Uridylate kinase from Legionella pneumophila (strain Lens).